Here is a 353-residue protein sequence, read N- to C-terminus: Quinolinate synthase (353 aa).

Iminosuccinate contacts are provided by His47 and Ser68. A [4Fe-4S] cluster-binding site is contributed by Cys113. Iminosuccinate-binding positions include Tyr139–Asn141 and Ser156. Cys200 serves as a coordination point for [4Fe-4S] cluster. Residues His226 to Glu228 and Thr243 contribute to the iminosuccinate site. Cys297 lines the [4Fe-4S] cluster pocket.

It belongs to the quinolinate synthase family. Type 1 subfamily. It depends on [4Fe-4S] cluster as a cofactor.

Its subcellular location is the cytoplasm. It catalyses the reaction iminosuccinate + dihydroxyacetone phosphate = quinolinate + phosphate + 2 H2O + H(+). Its pathway is cofactor biosynthesis; NAD(+) biosynthesis; quinolinate from iminoaspartate: step 1/1. Functionally, catalyzes the condensation of iminoaspartate with dihydroxyacetone phosphate to form quinolinate. This Pectobacterium carotovorum subsp. carotovorum (strain PC1) protein is Quinolinate synthase.